A 195-amino-acid polypeptide reads, in one-letter code: Probable DNA-directed RNA polymerase subunit delta (195 aa).

The 68-residue stretch at 14–81 folds into the HTH HARE-type domain; it reads LSMIEVAHAI…GDNTWGLRAW (68 aa). The segment at 91–195 is disordered; the sequence is TVGETEDEED…DEEDKEDDEE (105 aa). Acidic residues-rich tracts occupy residues 116-171 and 179-195; these read TDDD…EDQL and FGDDEEEDEEDKEDDEE.

It belongs to the RpoE family. In terms of assembly, RNAP is composed of a core of 2 alpha, a beta and a beta' subunits. The core is associated with a delta subunit and one of several sigma factors.

In terms of biological role, participates in both the initiation and recycling phases of transcription. In the presence of the delta subunit, RNAP displays an increased specificity of transcription, a decreased affinity for nucleic acids, and an increased efficiency of RNA synthesis because of enhanced recycling. The polypeptide is Probable DNA-directed RNA polymerase subunit delta (Limosilactobacillus fermentum (strain NBRC 3956 / LMG 18251) (Lactobacillus fermentum)).